The following is a 182-amino-acid chain: UPF0254 protein MK0012 (182 aa).

It belongs to the UPF0254 family.

The protein is UPF0254 protein MK0012 of Methanopyrus kandleri (strain AV19 / DSM 6324 / JCM 9639 / NBRC 100938).